Here is a 488-residue protein sequence, read N- to C-terminus: Aerolysin (488 aa).

The N-terminal stretch at methionine 1–alanine 24 is a signal peptide. 2 cysteine pairs are disulfide-bonded: cysteine 43–cysteine 99 and cysteine 183–cysteine 188. The interaction with host N-linked glycan stretch occupies residues tryptophan 69–tyrosine 85. Residues tyrosine 256–tryptophan 288 are part of the transmembrane beta-barrel after proteolytic activation of the toxin and insertion into the host membrane. The segment at arginine 346–histidine 355 is interaction with glycans from host GPI-anchor. Positions threonine 444 to glutamine 488 are excised as a propeptide.

Belongs to the aerolysin family. Homodimer in solution; homoheptamer in the host membrane. After binding to GPI-anchored proteins in target membranes and proteolytic removal of the C-terminal propeptide, the protein assembles into a heptameric pre-pore complex. A further conformation change leads to insertion into the host membrane. Post-translationally, proteolytic cleavage and subsequent release of the propeptide trigger a major conformation change, leading to the formation of a heptameric pre-pore that then inserts into the host membrane.

It localises to the secreted. It is found in the host cell membrane. In terms of biological role, secreted, cytolytic toxin that forms pores in host membranes after proteolytic removal of a C-terminal propeptide, leading to destruction of the membrane permeability barrier and cell death. The pores are formed by transmembrane beta-strands and are approximately 3 nm in diameter. The sequence is that of Aerolysin (asa1) from Aeromonas sobria.